A 324-amino-acid polypeptide reads, in one-letter code: Acetyl-coenzyme A carboxylase carboxyl transferase subunit alpha (324 aa).

In terms of domain architecture, CoA carboxyltransferase C-terminal spans 44–298; that stretch reads QLERRAEELR…KQTLIDTIDE (255 aa).

The protein belongs to the AccA family. Acetyl-CoA carboxylase is a heterohexamer composed of biotin carboxyl carrier protein (AccB), biotin carboxylase (AccC) and two subunits each of ACCase subunit alpha (AccA) and ACCase subunit beta (AccD).

The protein resides in the cytoplasm. The catalysed reaction is N(6)-carboxybiotinyl-L-lysyl-[protein] + acetyl-CoA = N(6)-biotinyl-L-lysyl-[protein] + malonyl-CoA. The protein operates within lipid metabolism; malonyl-CoA biosynthesis; malonyl-CoA from acetyl-CoA: step 1/1. Component of the acetyl coenzyme A carboxylase (ACC) complex. First, biotin carboxylase catalyzes the carboxylation of biotin on its carrier protein (BCCP) and then the CO(2) group is transferred by the carboxyltransferase to acetyl-CoA to form malonyl-CoA. The chain is Acetyl-coenzyme A carboxylase carboxyl transferase subunit alpha from Rippkaea orientalis (strain PCC 8801 / RF-1) (Cyanothece sp. (strain PCC 8801)).